We begin with the raw amino-acid sequence, 100 residues long: Defensin-6 (100 aa).

The N-terminal stretch at 1–19 (MRTLTILTAVLLVALQAKA) is a signal peptide. Residues 20–68 (EPLQAEDDPLQAKAYEADAQEQRGANDQDFAVSFAEDASSSLRALGSTR) constitute a propeptide that is removed on maturation. Disulfide bonds link Cys72–Cys99, Cys74–Cys88, and Cys78–Cys98.

Belongs to the alpha-defensin family. In terms of assembly, homodimer. Self-assembles into higher-order oligomers termed nanonets, fibril-like structures that entrap microbes. Self-assembly into nanonets seems to protect against proteolytic digestion in duodenal fluid. Interacts with Y.enterocolitica invasin and S.typhimurium fliC/flagellin; the interaction creates an anchoring site for progressive DEFA6 self-assembly into nanonets. In terms of processing, proteolytically cleaved by trypsin at Arg-68; the propeptide is stored in the tissue of the small intestine and the mature peptide is found in the luminal fluid; cleavage may occur during or after release into the lumen. The N-terminal propeptide region suppresses self-assembly and renders DEFA6 propeptide unable to agglutinate bacteria and protect human epithelial cells from bacterial invasion. Under reducing conditions, naturally present in the gut owing to the low redox potential or enzymatically generated by the thioredoxin system, the disulfide bridges are opened leading to a conformational change of DEF6, thereby changing its antimicrobial spectrum. The reduced form exhibits inhibitory activity against anaerobic bacteria, in contrast to the minimal antimicrobial activity of the disulfide-linked oxidized form. The formation of higher-order nanonets and bacterial entrapment is independent of the redox state. Expressed in Paneth cells of the small intestine (at protein level).

Its subcellular location is the secreted. The protein localises to the cytoplasmic vesicle. It is found in the secretory vesicle. In terms of biological role, host-defense peptide that contributes to intestinal innate immunity and mediates homeostasis at mucosal surfaces by forming higher-order oligomers that capture bacteria and prevent microbial invasion of the epithelium. After binding to bacterial surface proteins, undergoes ordered self-assembly to form fibril-like nanonets that surround and entangle bacteria and thereby prevent bacterial invasion across the epithelial barrier. Entangles and agglutinates Gram-negative bacteria, such as E.coli, S.typhimurium and Y.enterocolitica, and Gram-positive bacteria such as L.monocytogenes, thereby protecting the intestine against invasion by enteric bacterial pathogens. Blocks adhesion of C.albicans to intestinal epithelial cells and thereby suppresses fungal invasion of epithelial cells and biofilm formation. Under reducing conditions and in an acidic environment similar to the intestinal milieu, exhibits inhibitory activity against anaerobic bacteria such as B.adolescentis, L.acidophilus and B.breve, as well as B.longum and S.thermophilus, possibly by leading to alterations in bacterial cell envelope structures. The disulfide-linked oxidized form exhibits negligible antimicrobial activity against Gram-negative and Gram-positive bacteria, as compared to the enteric defensin DEFA5. In Homo sapiens (Human), this protein is Defensin-6 (DEFA6).